The sequence spans 870 residues: LPS-assembly protein LptD (870 aa).

An N-terminal signal peptide occupies residues 1 to 25; the sequence is MKQGKSFIFYCLVLLLCGFQQLSSA.

Belongs to the LptD family. As to quaternary structure, component of the lipopolysaccharide transport and assembly complex. Interacts with LptE and LptA.

The protein localises to the cell outer membrane. Functionally, together with LptE, is involved in the assembly of lipopolysaccharide (LPS) at the surface of the outer membrane. This Coxiella burnetii (strain RSA 493 / Nine Mile phase I) protein is LPS-assembly protein LptD.